Consider the following 238-residue polypeptide: Uridylate kinase (238 aa).

12–15 (KLSG) contacts ATP. A UMP-binding site is contributed by Gly-54. 2 residues coordinate ATP: Gly-55 and Arg-59. Residues Asp-74 and 135 to 142 (TGNPFFTT) each bind UMP. Residues Thr-162, Tyr-168, and Asp-171 each coordinate ATP.

It belongs to the UMP kinase family. In terms of assembly, homohexamer.

It localises to the cytoplasm. The enzyme catalyses UMP + ATP = UDP + ADP. Its pathway is pyrimidine metabolism; CTP biosynthesis via de novo pathway; UDP from UMP (UMPK route): step 1/1. Its activity is regulated as follows. Inhibited by UTP. Its function is as follows. Catalyzes the reversible phosphorylation of UMP to UDP. In Janthinobacterium sp. (strain Marseille) (Minibacterium massiliensis), this protein is Uridylate kinase.